Reading from the N-terminus, the 545-residue chain is CTP synthase (545 aa).

The interval 2-266 (TTNYIFVTGG…DDYICKRFSL (265 aa)) is amidoligase domain. Residue S14 participates in CTP binding. S14 is a binding site for UTP. Residues 15–20 (SLGKGI) and D72 contribute to the ATP site. Mg(2+)-binding residues include D72 and E140. Residues 147–149 (DIE), 187–192 (KTKPTQ), and K223 contribute to the CTP site. UTP-binding positions include 187–192 (KTKPTQ) and K223. ATP is bound at residue 239 to 241 (KDV). The Glutamine amidotransferase type-1 domain maps to 291 to 542 (TIGMVGKYIE…VKAANEHQKR (252 aa)). L-glutamine is bound at residue G352. C379 acts as the Nucleophile; for glutamine hydrolysis in catalysis. L-glutamine is bound by residues 380–383 (LGMQ), E403, and R470. Catalysis depends on residues H515 and E517.

Belongs to the CTP synthase family. In terms of assembly, homotetramer.

It carries out the reaction UTP + L-glutamine + ATP + H2O = CTP + L-glutamate + ADP + phosphate + 2 H(+). The catalysed reaction is L-glutamine + H2O = L-glutamate + NH4(+). It catalyses the reaction UTP + NH4(+) + ATP = CTP + ADP + phosphate + 2 H(+). It functions in the pathway pyrimidine metabolism; CTP biosynthesis via de novo pathway; CTP from UDP: step 2/2. With respect to regulation, allosterically activated by GTP, when glutamine is the substrate; GTP has no effect on the reaction when ammonia is the substrate. The allosteric effector GTP functions by stabilizing the protein conformation that binds the tetrahedral intermediate(s) formed during glutamine hydrolysis. Inhibited by the product CTP, via allosteric rather than competitive inhibition. Its function is as follows. Catalyzes the ATP-dependent amination of UTP to CTP with either L-glutamine or ammonia as the source of nitrogen. Regulates intracellular CTP levels through interactions with the four ribonucleotide triphosphates. This Salmonella typhi protein is CTP synthase.